A 149-amino-acid chain; its full sequence is Calmodulin (149 aa).

Ala2 carries the post-translational modification N-acetylalanine. 4 EF-hand domains span residues 8-43 (DQISEFKEAFSLFDKDGDGCITTKELGTVMRSLGQN), 44-79 (PTEAELQDMINEVDADGNGTIDFPEPLNLMARKMKD), 81-116 (DSEEELKEAFRVFDKDQNGFISAAELRHVMTNLGEK), and 117-149 (LTDEEVDEMIREADVDGDGQINYEEFVKVMMAK). Residues Asp21, Asp23, Asp25, Cys27, Glu32, Asp57, Asp59, Asn61, Thr63, Glu68, Asp94, Asp96, Asn98, and Glu105 each coordinate Ca(2+). Lys116 is subject to N6,N6,N6-trimethyllysine. Ca(2+) contacts are provided by Asp130, Asp132, Asp134, Gln136, and Glu141.

This sequence belongs to the calmodulin family.

In terms of biological role, calmodulin mediates the control of a large number of enzymes, ion channels and other proteins by Ca(2+). Among the enzymes to be stimulated by the calmodulin-Ca(2+) complex are a number of protein kinases and phosphatases. This is Calmodulin (CAM) from Malus domestica (Apple).